The primary structure comprises 125 residues: Protein ApaG (125 aa).

An ApaG domain is found at 1–125 (MINSPRVCVQ…FRLAVPTLIH (125 aa)).

The protein is Protein ApaG of Klebsiella pneumoniae (strain 342).